The sequence spans 435 residues: MKTTYVNATIVTMNEQNEVIENGYIIVENDQIIDVKSGEFANDFEVDEVIDMKGKWVLPGLVNTHTHVVMSLLRGIGDDMLLQPWLETRIWPLESQFTPELAVASTELGLLEMVKSGTTSFSDMFNPIGVDQDAIMETVSRSGMRAAVSRTLFSFGTKDDEKKAIEEAEKYVKRYYNESGMLTTMVAPHSPYTCSTELLEECARIAVENQTMVHIHLSETEREVRDIEAQYGKRPVEYAASCGLFKRPTVIAHGVVLNENERAFLAEHDVRVAHNPNSNLKLGSGIANVKAMLEAGMKVGIATDSVASNNNLDMFEEMRIATLLQKGIHQDATALPVETALTLATKGAAEVIGMKQTGSLEVGKCADFITIDPSNKPHLQPADEVLSHLVYAASGKDISDVIINGKRVVWNGECKTLDEERIIFEASRYKRGLQR.

Zn(2+)-binding residues include histidine 65 and histidine 67. Substrate is bound by residues glutamate 94, arginine 150, and histidine 189. Residue histidine 216 coordinates Zn(2+). Substrate is bound by residues glutamate 219 and aspartate 304. Aspartate 304 contacts Zn(2+).

This sequence belongs to the metallo-dependent hydrolases superfamily. MTA/SAH deaminase family. Requires Zn(2+) as cofactor.

The catalysed reaction is S-adenosyl-L-homocysteine + H2O + H(+) = S-inosyl-L-homocysteine + NH4(+). It catalyses the reaction S-methyl-5'-thioadenosine + H2O + H(+) = S-methyl-5'-thioinosine + NH4(+). In terms of biological role, catalyzes the deamination of 5-methylthioadenosine and S-adenosyl-L-homocysteine into 5-methylthioinosine and S-inosyl-L-homocysteine, respectively. Is also able to deaminate adenosine. This Bacillus cereus (strain ATCC 10987 / NRS 248) protein is 5-methylthioadenosine/S-adenosylhomocysteine deaminase.